The chain runs to 239 residues: Transcriptional regulatory protein BtsR (239 aa).

The 114-residue stretch at K3–R116 folds into the Response regulatory domain. D54 carries the post-translational modification 4-aspartylphosphate. The region spanning I137–L239 is the HTH LytTR-type domain.

Phosphorylated by BtsS.

In terms of biological role, member of the two-component regulatory system BtsS/BtsR. BtsR regulates expression of btsT by binding to its promoter region. In Shigella flexneri, this protein is Transcriptional regulatory protein BtsR.